A 315-amino-acid polypeptide reads, in one-letter code: Gamma-hemolysin component C (315 aa).

A signal peptide spans 1 to 29 (MLKNKILATTLSVSLLAPLANPLLENAKA).

This sequence belongs to the aerolysin family. Toxicity requires sequential binding and synergistic association of a class S and a class F component which form heterooligomeric complexes. HlgC (class S) associates with HlgB (class F) thus forming an CB toxin.

Toxin that seems to act by forming pores in the membrane of the cell. Has a hemolytic and a leucotoxic activity. In Staphylococcus aureus (strain MRSA252), this protein is Gamma-hemolysin component C (hlgC).